The following is a 257-amino-acid chain: Short-chain dehydrogenase reductase 3b (257 aa).

Position 12-36 (12-36) interacts with NAD(+); it reads IITGGASGIGAESVRLFTEHGARVV. Substrate is bound at residue Ser144. Tyr157 serves as the catalytic Proton acceptor.

The protein belongs to the short-chain dehydrogenases/reductases (SDR) family.

The protein is Short-chain dehydrogenase reductase 3b (SDR3b) of Arabidopsis thaliana (Mouse-ear cress).